A 468-amino-acid chain; its full sequence is UDP-N-acetylmuramoyl-L-alanine--L-glutamate ligase (468 aa).

122-128 (GTKGKST) contributes to the ATP binding site.

Belongs to the MurCDEF family. MurD2 subfamily.

The protein resides in the cytoplasm. The enzyme catalyses UDP-N-acetyl-alpha-D-muramoyl-L-alanine + L-glutamate + ATP = UDP-N-acetyl-alpha-D-muramoyl-L-alanyl-L-glutamate + ADP + phosphate + H(+). Its pathway is cell wall biogenesis; peptidoglycan biosynthesis. In terms of biological role, cell wall formation. Catalyzes the addition of L-glutamate to the nucleotide precursor UDP-N-acetylmuramoyl-L-alanine. This Xanthomonas campestris pv. campestris (strain 8004) protein is UDP-N-acetylmuramoyl-L-alanine--L-glutamate ligase.